A 143-amino-acid polypeptide reads, in one-letter code: Envelope protein A28 homolog (143 aa).

Residues 1-21 (MNTVQILVVILITTALSFLVF) traverse the membrane as a helical; Signal-anchor for type II membrane protein segment. Topologically, residues 22 to 143 (QLWYYAENYE…LLRLLMANTS (122 aa)) are virion surface.

Belongs to the poxviridae A28 protein family. Contains two intramolecular disulfide bonds. They are created by the viral disulfide bond formation pathway, a poxvirus-specific pathway that operates on the cytoplasmic side of the MV membranes.

The protein localises to the virion membrane. Its function is as follows. Envelope protein required for virus entry into host cell and for cell-cell fusion (syncytium formation). The polypeptide is Envelope protein A28 homolog (Amsacta (AmEPV)).